Reading from the N-terminus, the 351-residue chain is DNA polymerase IV (351 aa).

In terms of domain architecture, UmuC spans 4–185 (IIHVDMDCFF…LPLAKIPGVG (182 aa)). 2 residues coordinate Mg(2+): Asp-8 and Asp-103. Glu-104 is an active-site residue.

It belongs to the DNA polymerase type-Y family. Monomer. Requires Mg(2+) as cofactor.

Its subcellular location is the cytoplasm. The catalysed reaction is DNA(n) + a 2'-deoxyribonucleoside 5'-triphosphate = DNA(n+1) + diphosphate. Its function is as follows. Poorly processive, error-prone DNA polymerase involved in untargeted mutagenesis. Copies undamaged DNA at stalled replication forks, which arise in vivo from mismatched or misaligned primer ends. These misaligned primers can be extended by PolIV. Exhibits no 3'-5' exonuclease (proofreading) activity. May be involved in translesional synthesis, in conjunction with the beta clamp from PolIII. The sequence is that of DNA polymerase IV from Escherichia coli O157:H7.